The sequence spans 97 residues: Large ribosomal subunit protein bL28 (97 aa).

This sequence belongs to the bacterial ribosomal protein bL28 family.

In Rickettsia prowazekii (strain Madrid E), this protein is Large ribosomal subunit protein bL28.